The chain runs to 286 residues: Bifunctional protein FolD (286 aa).

Residues 166 to 168 (GAS) and Ile232 contribute to the NADP(+) site.

The protein belongs to the tetrahydrofolate dehydrogenase/cyclohydrolase family. Homodimer.

The catalysed reaction is (6R)-5,10-methylene-5,6,7,8-tetrahydrofolate + NADP(+) = (6R)-5,10-methenyltetrahydrofolate + NADPH. It catalyses the reaction (6R)-5,10-methenyltetrahydrofolate + H2O = (6R)-10-formyltetrahydrofolate + H(+). It participates in one-carbon metabolism; tetrahydrofolate interconversion. Catalyzes the oxidation of 5,10-methylenetetrahydrofolate to 5,10-methenyltetrahydrofolate and then the hydrolysis of 5,10-methenyltetrahydrofolate to 10-formyltetrahydrofolate. The chain is Bifunctional protein FolD from Marinobacter nauticus (strain ATCC 700491 / DSM 11845 / VT8) (Marinobacter aquaeolei).